A 282-amino-acid chain; its full sequence is MFYLIYKEKGISSFKAIKDFAWQNNIKKIGHSGTLDPEATGLLLLASDEDTKLLDYVDKKFKSYRATMILGLQSQSFDSQGKIINSSNLKVDNLTIEKTIKNFVGPFVQIPPIFSAKKINGKRAYEYARQGSEISMKAQEVFVKSIEIEKIDFPKVIFKAKVSRGTYIRSLINQIGLELKTYALMDDLERIELSGLSKNDLGVVSDLDIIDLEVLSLEKHEILTLAKGQKFSKDLADGKYAFIYKNTKKILGICKIESKIIAPIKIFNKKIEKSLKKDEKNE.

D36 serves as the catalytic Nucleophile.

It belongs to the pseudouridine synthase TruB family. Type 1 subfamily.

It carries out the reaction uridine(55) in tRNA = pseudouridine(55) in tRNA. Functionally, responsible for synthesis of pseudouridine from uracil-55 in the psi GC loop of transfer RNAs. The chain is tRNA pseudouridine synthase B from Mycoplasmopsis pulmonis (strain UAB CTIP) (Mycoplasma pulmonis).